The sequence spans 275 residues: NH(3)-dependent NAD(+) synthetase (275 aa).

Residue 46-53 (GISGGQDS) coordinates ATP. Asp52 contacts Mg(2+). Arg140 is a deamido-NAD(+) binding site. Thr160 provides a ligand contact to ATP. Residue Glu165 participates in Mg(2+) binding. Deamido-NAD(+) is bound by residues Lys173 and Asp180. ATP-binding residues include Lys189 and Thr211. 260–261 (HK) provides a ligand contact to deamido-NAD(+).

This sequence belongs to the NAD synthetase family. Homodimer.

The enzyme catalyses deamido-NAD(+) + NH4(+) + ATP = AMP + diphosphate + NAD(+) + H(+). Its pathway is cofactor biosynthesis; NAD(+) biosynthesis; NAD(+) from deamido-NAD(+) (ammonia route): step 1/1. In terms of biological role, catalyzes the ATP-dependent amidation of deamido-NAD to form NAD. Uses ammonia as a nitrogen source. The protein is NH(3)-dependent NAD(+) synthetase of Salmonella paratyphi A (strain ATCC 9150 / SARB42).